The primary structure comprises 80 residues: RNA-binding protein KhpA (80 aa).

In terms of domain architecture, KH spans 33-80; that stretch reads GRTVEVHVHPDDLGKVIGRGGRTATALRTLVAGIGGRGIRVDVVDTDQ.

The protein belongs to the KhpA RNA-binding protein family.

The protein localises to the cytoplasm. In terms of biological role, a probable RNA-binding protein. The polypeptide is RNA-binding protein KhpA (Mycobacterium bovis (strain ATCC BAA-935 / AF2122/97)).